Consider the following 185-residue polypeptide: Ribosome-recycling factor (185 aa).

Belongs to the RRF family.

The protein localises to the cytoplasm. Its function is as follows. Responsible for the release of ribosomes from messenger RNA at the termination of protein biosynthesis. May increase the efficiency of translation by recycling ribosomes from one round of translation to another. This Campylobacter lari (strain RM2100 / D67 / ATCC BAA-1060) protein is Ribosome-recycling factor.